The chain runs to 363 residues: ADP-ribosylhydrolase ARH3 (363 aa).

Glu41 serves as a coordination point for Mg(2+). Thr64 carries the phosphothreonine modification. Positions 76, 77, and 78 each coordinate Mg(2+). Asp77 is a substrate binding site. Substrate contacts are provided by residues 146–152, His182, Leu235, and Ile271; that span reads KGSYGNG. Mg(2+) is bound by residues Asp314, Asp316, and Thr317.

Belongs to the ADP-ribosylglycohydrolase family. As to quaternary structure, monomer. Requires Mg(2+) as cofactor. As to expression, ubiquitous. Expressed in skin fibroblasts.

The protein resides in the nucleus. The protein localises to the cytoplasm. It is found in the chromosome. It localises to the mitochondrion matrix. It carries out the reaction [(1''-&gt;2')-ADP-alpha-D-ribose](n) + H2O = [(1''-&gt;2')-ADP-alpha-D-ribose](n-1) + ADP-D-ribose. It catalyses the reaction 1''-O-acetyl-ADP-alpha-D-ribose + H2O = ADP-D-ribose + acetate + H(+). The catalysed reaction is O-(ADP-D-ribosyl)-L-seryl-[protein] + H2O = ADP-D-ribose + L-seryl-[protein]. The enzyme catalyses alpha-NAD(+) + H2O = ADP-D-ribose + nicotinamide + H(+). Its activity is regulated as follows. The protein undergoes a dramatic conformational switch from closed to open states upon substrate-binding, which enables specific substrate recognition for the 1''-O-linkage. The glutamate flap (Glu-41) blocks substrate entrance to Mg(2+) in the unliganded closed state. In presence of substrate, Glu-41 is ejected from the active site: this closed-to-open transition significantly widens the substrate-binding channel and precisely positions the scissile 1''-O-linkage for cleavage while securing tightly 2'- and 3'-hydroxyls of ADP-ribose. Its function is as follows. ADP-ribosylhydrolase that preferentially hydrolyzes the scissile alpha-O-linkage attached to the anomeric C1'' position of ADP-ribose and acts on different substrates, such as proteins ADP-ribosylated on serine and threonine, free poly(ADP-ribose) and O-acetyl-ADP-D-ribose. Specifically acts as a serine mono-ADP-ribosylhydrolase by mediating the removal of mono-ADP-ribose attached to serine residues on proteins, thereby playing a key role in DNA damage response. Serine ADP-ribosylation of proteins constitutes the primary form of ADP-ribosylation of proteins in response to DNA damage. Does not hydrolyze ADP-ribosyl-arginine, -cysteine, -diphthamide, or -asparagine bonds. Also able to degrade protein free poly(ADP-ribose), which is synthesized in response to DNA damage: free poly(ADP-ribose) acts as a potent cell death signal and its degradation by ADPRHL2 protects cells from poly(ADP-ribose)-dependent cell death, a process named parthanatos. Also hydrolyzes free poly(ADP-ribose) in mitochondria. Specifically digests O-acetyl-ADP-D-ribose, a product of deacetylation reactions catalyzed by sirtuins. Specifically degrades 1''-O-acetyl-ADP-D-ribose isomer, rather than 2''-O-acetyl-ADP-D-ribose or 3''-O-acetyl-ADP-D-ribose isomers. This is ADP-ribosylhydrolase ARH3 from Homo sapiens (Human).